Consider the following 519-residue polypeptide: Zinc finger protein 692 (519 aa).

A disordered region spans residues 123–314 (GPSLSPTPSE…PAWDEDTAQI (192 aa)). Polar residues predominate over residues 145-155 (RSWCSEATSGQ). At Ser-162 the chain carries Phosphoserine. Residues 164 to 173 (HDERTQEARL) are compositionally biased toward basic and acidic residues. The span at 177 to 187 (VGPPPETFPPP) shows a compositional bias: pro residues. Positions 188 to 206 (GEEEGEEEEDNDEDEEEML) are enriched in acidic residues. At Ser-231 the chain carries Phosphoserine. Residues 247 to 266 (AALSSPLAVPALSASSLSSR) are compositionally biased toward low complexity. Residues 277–303 (PQLSRTPQAAQQTEALASTGSQAQSAP) are compositionally biased toward polar residues. C2H2-type zinc fingers lie at residues 328–353 (MPCD…KYQH), 359–383 (FSCP…MKLH), 389–411 (YICE…RRIH), 417–439 (LQCE…QRKH), and 448–471 (FPCE…SKSH). A disordered region spans residues 469–519 (KSHPALLLAPQESPSGPLEPCPSISAPGPLGSSEGSRPSASPQAPTLLPQQ). Ser-470 bears the Phosphoserine; by AMPK mark. Over residues 501-519 (SEGSRPSASPQAPTLLPQQ) the composition is skewed to polar residues.

Belongs to the krueppel C2H2-type zinc-finger protein family. Post-translationally, phosphorylation at Ser-470 results in loss of DNA-binding activity. As to expression, ubiquitous. Highly expressed in brain, thymus and spleen.

It localises to the nucleus. May act as an transcriptional repressor for PCK1 gene expression, in turn may participate in the hepatic gluconeogenesis regulation through the activated AMPK signaling pathway. This chain is Zinc finger protein 692 (ZNF692), found in Homo sapiens (Human).